The primary structure comprises 360 residues: CLIP domain-containing serine protease B4 (360 aa).

The signal sequence occupies residues 1 to 24 (MIGNRVINLLIVATLALAGQTVLA). Residues 30-83 (DCVNPVGEAGKCVLFRECQPLVDIYNKPVNTPDDTQFLTESRCGLYERKTLVCC) enclose the Clip domain. 4 disulfide bridges follow: C31–C82, C41–C72, C47–C83, and C138–C154. One can recognise a Peptidase S1 domain in the interval 108–360 (VIGGQPTKID…YVDWIKDNIY (253 aa)). Residues H153 and D213 each act as charge relay system in the active site. N-linked (GlcNAc...) asparagine glycosylation occurs at N224. 2 cysteine pairs are disulfide-bonded: C280-C297 and C307-C336. S311 serves as the catalytic Charge relay system.

This sequence belongs to the peptidase S1 family. CLIP subfamily. In terms of assembly, interacts with SRPN2 in the hemolymph of immune-challenged female mosquitoes; the interaction results in CLIPB4 inhibition. In terms of tissue distribution, in females, expressed in fat body, cuticle, thorax and ovaries.

Its subcellular location is the secreted. Functionally, serine protease which plays a role in the innate immune response against protozoan and bacterial pathogens, such as Plasmodium bergei, Staphylococcus aureus, Micrococcus luteus and Escherichia coli, by activating the melanization cascade. Cleaves and activates CLIPB8. In the resistant strain L3-5, involved in the melanization of killed parasite P.berghei ookinetes which results in their clearance. In the susceptible strain G3, appears to be dispensable for ookinete elimination which occurs by lysis. This Anopheles gambiae (African malaria mosquito) protein is CLIP domain-containing serine protease B4.